Reading from the N-terminus, the 521-residue chain is Protein NRT1/ PTR FAMILY 4.2 (521 aa).

The next 12 helical transmembrane spans lie at 30–50 (IVCVVVMMENIVFIANGFNFV), 65–85 (ANMVTNFMGTSFLLTLFGGFI), 89–109 (FVTHFTTFIVFCCIELMGLIL), 133–153 (AILFTGLYAMAIGTGGLKASL), 172–192 (FFDWLYFSICSGCLLAVTVVL), 204–224 (FNISVGILATALCIFTVGLPF), 297–317 (FLGLLPIFGSTIVMSCCVAQL), 338–358 (IPVPSLTAIPLIFMLLSIPLY), 381–401 (IGLGLALSSVSMAVSAIVEAK), 413–433 (ISVLWLVFQYLMLSVSDMLTL), 451–471 (ISTALGWCSTALGFFLSTTLV), and 498–518 (LFYVLLCVLNTLNLLNYIFWA).

This sequence belongs to the major facilitator superfamily. Proton-dependent oligopeptide transporter (POT/PTR) (TC 2.A.17) family. In terms of tissue distribution, expressed in siliques.

The protein resides in the membrane. Involved in abscisic acid transport. The protein is Protein NRT1/ PTR FAMILY 4.2 (NPF4.2) of Arabidopsis thaliana (Mouse-ear cress).